The primary structure comprises 198 residues: dCTP deaminase, dUMP-forming (198 aa).

Residues 115–120 (KSSIAR), D133, 141–143 (TLE), Q162, Y175, and K184 contribute to the dCTP site. E143 serves as the catalytic Proton donor/acceptor.

It belongs to the dCTP deaminase family. As to quaternary structure, homotrimer.

It carries out the reaction dCTP + 2 H2O = dUMP + NH4(+) + diphosphate. It participates in pyrimidine metabolism; dUMP biosynthesis; dUMP from dCTP: step 1/1. Its function is as follows. Bifunctional enzyme that catalyzes both the deamination of dCTP to dUTP and the hydrolysis of dUTP to dUMP without releasing the toxic dUTP intermediate. The chain is dCTP deaminase, dUMP-forming from Nanoarchaeum equitans (strain Kin4-M).